Here is a 461-residue protein sequence, read N- to C-terminus: Probable tubulin polyglutamylase TTLL9 (461 aa).

The tract at residues 1-21 (MSRPKNQNYKGHGLQKGKERE) is disordered. The region spanning 22–402 (QRASIRFKTT…EARLTGREKR (381 aa)) is the TTL domain. ATP is bound by residues Lys-149 and 155–156 (QG). Gln-155 provides a ligand contact to a protein. The disordered stretch occupies residues 182–208 (SLEAQPARNTVNPSGSHDTRSSDDQKD). A compositionally biased stretch (polar residues) spans 188–197 (ARNTVNPSGS). Basic and acidic residues predominate over residues 198–208 (HDTRSSDDQKD). ATP is bound by residues 218 to 221 (QRYI) and 231 to 233 (KFD). Arg-257 contributes to the L-glutamate binding site. Residue 276 to 277 (TN) coordinates ATP. L-glutamate is bound at residue Lys-294. 3 residues coordinate Mg(2+): Asp-348, Glu-361, and Asn-363. L-glutamate is bound at residue Lys-379.

This sequence belongs to the tubulin--tyrosine ligase family. Mg(2+) is required as a cofactor.

The protein localises to the cytoplasm. Its subcellular location is the cytoskeleton. The protein resides in the cilium basal body. It is found in the flagellum axoneme. The catalysed reaction is (L-glutamyl)(n)-gamma-L-glutamyl-L-glutamyl-[protein] + L-glutamate + ATP = (L-glutamyl)(n+1)-gamma-L-glutamyl-L-glutamyl-[protein] + ADP + phosphate + H(+). Its function is as follows. Probable tubulin polyglutamylase that generates side chains of glutamate on the gamma-carboxyl group of specific glutamate residues within the C-terminal tail of target proteins. Similar to TTLL1, may acquire enzymatic activity only in complex with other proteins as it is most likely lacking domains important for autonomous activity. Mediates tubulin polyglutamylation which induces establishment of microtubule heterogeneity in sperm flagella, thereby playing a role in normal motile flagella axoneme structure and sperm flagella beating pattern. The chain is Probable tubulin polyglutamylase TTLL9 (TTLL9) from Bos taurus (Bovine).